The sequence spans 304 residues: N-carbamoyl-D-amino acid hydrolase (304 aa).

One can recognise a CN hydrolase domain in the interval 5 to 276 (MILAVGQQGP…DEVITAAVDL (272 aa)). Residues Glu-47, Lys-127, and Cys-172 contribute to the active site.

In terms of assembly, homotetramer.

It catalyses the reaction an N-carbamoyl-D-amino acid + H2O + 2 H(+) = a D-alpha-amino acid + NH4(+) + CO2. The enzyme catalyzes the hydrolysis of N-carbamoyl-D-amino acids to the corresponding which are useful intermediates in the preparation of beta-lactam antibiotics. Industrial production of beta-lactam antibiotics is now being developed using this enzyme. This chain is N-carbamoyl-D-amino acid hydrolase, found in Rhizobium radiobacter (Agrobacterium tumefaciens).